We begin with the raw amino-acid sequence, 150 residues long: Cell division protein SepF (150 aa).

It belongs to the SepF family. As to quaternary structure, homodimer. Interacts with FtsZ.

Its subcellular location is the cytoplasm. In terms of biological role, cell division protein that is part of the divisome complex and is recruited early to the Z-ring. Probably stimulates Z-ring formation, perhaps through the cross-linking of FtsZ protofilaments. Its function overlaps with FtsA. This is Cell division protein SepF from Clostridium botulinum (strain Kyoto / Type A2).